Consider the following 511-residue polypeptide: Adenosine deaminase 2 (511 aa).

The N-terminal stretch at 1–29 (MLVDGPSEWPALRFLLLAVAMSFFGSALS) is a signal peptide. Residues 30–100 (IDETRAHLLL…HLIERSQVFN (71 aa)) are dimerization. His112 and His114 together coordinate Zn(2+). Asp115 serves as a coordination point for substrate. The N-linked (GlcNAc...) asparagine glycan is linked to Asn127. A PRB domain region spans residues 127-185 (NVTYRPHCHICFTPKGIMQFRFAHPTPRTSEKCSKWILLEDYRKRVQNVTEFDDSLLRN). Cys137 and Cys159 are joined by a disulfide. Asn174 and Asn185 each carry an N-linked (GlcNAc...) asparagine glycan. Substrate contacts are provided by residues 204-211 (WSKFETIF), His293, and Gly326. His356 provides a ligand contact to Zn(2+). Glu359 acts as the Proton donor in catalysis. Asn378 carries N-linked (GlcNAc...) asparagine glycosylation. Catalysis depends on His384, which acts as the Proton acceptor. Asp441 contacts Zn(2+). Asp442 lines the substrate pocket.

It belongs to the metallo-dependent hydrolases superfamily. Adenosine and AMP deaminases family. ADGF subfamily. As to quaternary structure, homodimer. Interacts with adenosine receptors. Binds heparin. It depends on Zn(2+) as a cofactor.

It is found in the secreted. The enzyme catalyses adenosine + H2O + H(+) = inosine + NH4(+). Adenosine deaminase that may contribute to the degradation of extracellular adenosine, a signaling molecule that controls a variety of cellular responses. Requires elevated adenosine levels for optimal enzyme activity. Binds to cell surfaces via proteoglycans and may play a role in the regulation of cell proliferation and differentiation, independently of its enzyme activity. This chain is Adenosine deaminase 2, found in Pongo abelii (Sumatran orangutan).